We begin with the raw amino-acid sequence, 243 residues long: Protein GIGAS CELL1 (243 aa).

Interacts with APC/C activators such as FZR1, FZR2, FZR3, CDC20.1 and CDC20.5. In terms of processing, phosphorylated by CDKA-1 in complex with CYCA1-2. Expressed in rapidly dividing tissues such as shoot apical meristem and young leaves. Associated with cell division but also with specific cell types.

Functionally, negative regulator of the anaphase-promoting complex/cyclosome (APC/C) ubiquitin ligase required for proper mitotic and meiotic progression and cell fate determination. Involved in entry into both meiosis I and meiosis II. Prevents endomitosis by preferentially inhibiting APC/C(CDC20). Required for megagametophyte and endosperm development. Triggers mitotic cyclins (e.g. CYCB1-1 and CYCB1-2) accumulation. Confers immunity to bacterial pathogens (e.g. Pseudomonas syringae pv. tomato DC3000), which is associated with increased expression of disease resistance (R) genes. GIG1 and PANS1 are part of a network linking centromere cohesion and cell cycle progression through control of APC/C activity. The chain is Protein GIGAS CELL1 (GIG1) from Arabidopsis thaliana (Mouse-ear cress).